The following is a 134-amino-acid chain: Ribosome-binding factor A (134 aa).

The protein belongs to the RbfA family. In terms of assembly, monomer. Binds 30S ribosomal subunits, but not 50S ribosomal subunits or 70S ribosomes.

The protein resides in the cytoplasm. One of several proteins that assist in the late maturation steps of the functional core of the 30S ribosomal subunit. Associates with free 30S ribosomal subunits (but not with 30S subunits that are part of 70S ribosomes or polysomes). Required for efficient processing of 16S rRNA. May interact with the 5'-terminal helix region of 16S rRNA. The protein is Ribosome-binding factor A of Bdellovibrio bacteriovorus (strain ATCC 15356 / DSM 50701 / NCIMB 9529 / HD100).